Here is a 194-residue protein sequence, read N- to C-terminus: Outer surface 22 kDa lipoprotein (194 aa).

Residues 1 to 21 (MYKNGFFKNYLSLLLIFLVIA) form the signal peptide. Cys-22 carries N-palmitoyl cysteine lipidation. A lipid anchor (S-diacylglycerol cysteine) is attached at Cys-22.

The protein resides in the cell outer membrane. The chain is Outer surface 22 kDa lipoprotein (p22) from Borreliella burgdorferi (strain N40) (Borrelia burgdorferi).